The sequence spans 104 residues: L-rhamnose mutarotase (104 aa).

Tyr18 is a substrate binding site. The active-site Proton donor is the His22. Residues Tyr41 and 76 to 77 (WW) each bind substrate.

It belongs to the rhamnose mutarotase family. As to quaternary structure, homodimer.

It localises to the cytoplasm. It carries out the reaction alpha-L-rhamnose = beta-L-rhamnose. Its pathway is carbohydrate metabolism; L-rhamnose metabolism. Involved in the anomeric conversion of L-rhamnose. This Escherichia fergusonii (strain ATCC 35469 / DSM 13698 / CCUG 18766 / IAM 14443 / JCM 21226 / LMG 7866 / NBRC 102419 / NCTC 12128 / CDC 0568-73) protein is L-rhamnose mutarotase.